We begin with the raw amino-acid sequence, 165 residues long: Large ribosomal subunit protein uL10 (165 aa).

This sequence belongs to the universal ribosomal protein uL10 family. Part of the ribosomal stalk of the 50S ribosomal subunit. The N-terminus interacts with L11 and the large rRNA to form the base of the stalk. The C-terminus forms an elongated spine to which L12 dimers bind in a sequential fashion forming a multimeric L10(L12)X complex.

Its function is as follows. Forms part of the ribosomal stalk, playing a central role in the interaction of the ribosome with GTP-bound translation factors. The sequence is that of Large ribosomal subunit protein uL10 from Shewanella pealeana (strain ATCC 700345 / ANG-SQ1).